A 133-amino-acid chain; its full sequence is Probable mitochondrial pyruvate carrier 2 (133 aa).

Transmembrane regions (helical) follow at residues 39-55, 73-91, and 99-116; these read VTNL…IVPI, ASSL…TLIS, and MLAA…YNIY.

The protein belongs to the mitochondrial pyruvate carrier (MPC) (TC 2.A.105) family.

The protein localises to the mitochondrion inner membrane. In terms of biological role, may mediate the uptake of pyruvate into mitochondria. The sequence is that of Probable mitochondrial pyruvate carrier 2 from Dictyostelium discoideum (Social amoeba).